Reading from the N-terminus, the 280-residue chain is Undecaprenyl-diphosphatase (280 aa).

8 helical membrane-spanning segments follow: residues 3–23 (IILLIQAVIMGIVEGITEFLP), 45–65 (VDLFVVVVQFGAILAVIYDYW), 88–108 (QLGLSLIVATIPVMIVGFTFA), 115–135 (LFNPIVVAIMLIIGGLLIFYV), 150–170 (VSLKTALMIGLLQCLALIPGT), 191–211 (AEFSFFLGIPVIIGAALLDFI), 225–245 (VLGIGTVVSFIIALLCIRLLV), and 255–275 (IFAWLRIITGVLVLIAAWGFG).

It belongs to the UppP family.

It is found in the cell inner membrane. The enzyme catalyses di-trans,octa-cis-undecaprenyl diphosphate + H2O = di-trans,octa-cis-undecaprenyl phosphate + phosphate + H(+). Catalyzes the dephosphorylation of undecaprenyl diphosphate (UPP). Confers resistance to bacitracin. This Psychrobacter cryohalolentis (strain ATCC BAA-1226 / DSM 17306 / VKM B-2378 / K5) protein is Undecaprenyl-diphosphatase.